A 91-amino-acid chain; its full sequence is Small ribosomal subunit protein uS17 (91 aa).

The protein belongs to the universal ribosomal protein uS17 family. As to quaternary structure, part of the 30S ribosomal subunit.

In terms of biological role, one of the primary rRNA binding proteins, it binds specifically to the 5'-end of 16S ribosomal RNA. The protein is Small ribosomal subunit protein uS17 of Thermobifida fusca (strain YX).